The chain runs to 264 residues: Complement C1q tumor necrosis factor-related protein 6 (264 aa).

The first 24 residues, 1–24 (MRVIMGIASLGFLWAVFLLPLVFG), serve as a signal peptide directing secretion. Asparagine 77 carries N-linked (GlcNAc...) asparagine glycosylation. The interval 81–125 (LKGDKGDRGPTGTPGKPGKNGTRGDRGSQGVKGDKGQAGSPGSSC) is disordered. Positions 83–124 (GDKGDRGPTGTPGKPGKNGTRGDRGSQGVKGDKGQAGSPGSS) constitute a Collagen-like domain. Over residues 90–100 (PTGTPGKPGKN) the composition is skewed to low complexity. Residues 125–264 (CQTHYSAFSV…SGHLIKAEDN (140 aa)) enclose the C1q domain.

It is found in the secreted. This chain is Complement C1q tumor necrosis factor-related protein 6 (C1qtnf6), found in Mus musculus (Mouse).